Consider the following 213-residue polypeptide: Thiamine-phosphate synthase (213 aa).

4-amino-2-methyl-5-(diphosphooxymethyl)pyrimidine-binding positions include 38–42 (QLRIK) and Asn-70. Mg(2+) is bound by residues Asp-71 and Asp-90. 4-amino-2-methyl-5-(diphosphooxymethyl)pyrimidine is bound at residue Ser-109. Position 135-137 (135-137 (TQT)) interacts with 2-[(2R,5Z)-2-carboxy-4-methylthiazol-5(2H)-ylidene]ethyl phosphate. Residue Lys-138 participates in 4-amino-2-methyl-5-(diphosphooxymethyl)pyrimidine binding. 2-[(2R,5Z)-2-carboxy-4-methylthiazol-5(2H)-ylidene]ethyl phosphate contacts are provided by residues Gly-168 and 188–189 (VS).

Belongs to the thiamine-phosphate synthase family. Mg(2+) is required as a cofactor.

The catalysed reaction is 2-[(2R,5Z)-2-carboxy-4-methylthiazol-5(2H)-ylidene]ethyl phosphate + 4-amino-2-methyl-5-(diphosphooxymethyl)pyrimidine + 2 H(+) = thiamine phosphate + CO2 + diphosphate. The enzyme catalyses 2-(2-carboxy-4-methylthiazol-5-yl)ethyl phosphate + 4-amino-2-methyl-5-(diphosphooxymethyl)pyrimidine + 2 H(+) = thiamine phosphate + CO2 + diphosphate. It carries out the reaction 4-methyl-5-(2-phosphooxyethyl)-thiazole + 4-amino-2-methyl-5-(diphosphooxymethyl)pyrimidine + H(+) = thiamine phosphate + diphosphate. It functions in the pathway cofactor biosynthesis; thiamine diphosphate biosynthesis; thiamine phosphate from 4-amino-2-methyl-5-diphosphomethylpyrimidine and 4-methyl-5-(2-phosphoethyl)-thiazole: step 1/1. Functionally, condenses 4-methyl-5-(beta-hydroxyethyl)thiazole monophosphate (THZ-P) and 2-methyl-4-amino-5-hydroxymethyl pyrimidine pyrophosphate (HMP-PP) to form thiamine monophosphate (TMP). This chain is Thiamine-phosphate synthase, found in Pectobacterium atrosepticum (strain SCRI 1043 / ATCC BAA-672) (Erwinia carotovora subsp. atroseptica).